A 335-amino-acid chain; its full sequence is Probable nicotianamine synthase 3 (335 aa).

The protein belongs to the nicotianamine synthase (NAS)-like family.

The catalysed reaction is 3 S-adenosyl-L-methionine = nicotianamine + 3 S-methyl-5'-thioadenosine + 3 H(+). In terms of biological role, synthesizes nicotianamine, a polyamine that is the first intermediate in the synthesis of the phytosiderophores of the mugineic acid type found in gramineae which serves as a sensor for the physiological iron status within the plant, and/or might be involved in the transport of iron. This chain is Probable nicotianamine synthase 3 (NAS3), found in Hordeum vulgare (Barley).